Consider the following 255-residue polypeptide: Ribonuclease HII (255 aa).

The RNase H type-2 domain maps to 72–255; that stretch reads QYIAGIDEAG…RSFAPVKAHE (184 aa). Residues Asp78, Glu79, and Asp170 each contribute to the a divalent metal cation site.

Belongs to the RNase HII family. Mn(2+) serves as cofactor. It depends on Mg(2+) as a cofactor.

It localises to the cytoplasm. The enzyme catalyses Endonucleolytic cleavage to 5'-phosphomonoester.. In terms of biological role, endonuclease that specifically degrades the RNA of RNA-DNA hybrids. The protein is Ribonuclease HII of Bacillus licheniformis (strain ATCC 14580 / DSM 13 / JCM 2505 / CCUG 7422 / NBRC 12200 / NCIMB 9375 / NCTC 10341 / NRRL NRS-1264 / Gibson 46).